A 195-amino-acid chain; its full sequence is Interferon omega-2 (195 aa).

A signal peptide spans 1 to 23 (MALLPSLLTALVVYELWPCGALG). Cystine bridges form between Cys24–Cys122 and Cys52–Cys162. N-linked (GlcNAc...) asparagine glycosylation occurs at Asn101.

The protein belongs to the alpha/beta interferon family.

The protein localises to the secreted. The chain is Interferon omega-2 from Equus caballus (Horse).